The primary structure comprises 150 residues: Calmodulin-like protein 7 (150 aa).

EF-hand domains lie at 1–36 (MDPTELKRVFQMFDKNGDGTITGKELSETLRSLGIY), 37–72 (IPDKELTQMIEKIDVNGDGCVDIDEFGELYKTIMDE), 75–110 (EEEEDMKEAFNVFDQNGDGFITVDELKAVLSSLGLK), and 113–148 (KTLDDCKKMIKKVDVDGDGRVNYKEFRQMMKGGGFN). Residues aspartate 14, asparagine 16, aspartate 18, threonine 20, glutamate 25, aspartate 50, asparagine 52, aspartate 54, cysteine 56, glutamate 61, aspartate 88, asparagine 90, aspartate 92, glutamate 99, aspartate 126, aspartate 128, aspartate 130, arginine 132, and glutamate 137 each contribute to the Ca(2+) site.

Belongs to the calmodulin family.

Its function is as follows. Potential calcium sensor. This chain is Calmodulin-like protein 7 (CML7), found in Arabidopsis thaliana (Mouse-ear cress).